The primary structure comprises 553 residues: ATP synthase F(1) complex subunit alpha, mitochondrial (553 aa).

A mitochondrion-targeting transit peptide spans 1–43; that stretch reads MLSVRVAAAVVRALPRRAGLVSRNALGSSFIAARNFHASNTHL. Phosphoserine occurs at positions 53 and 65. Ser-76 is modified (phosphoserine; alternate). Ser-76 carries an O-linked (GlcNAc) serine; alternate glycan. Ser-106 is subject to Phosphoserine. Lys-123, Lys-126, and Lys-132 each carry N6-acetyllysine. Residue Thr-134 is modified to Phosphothreonine. Lys-161 carries the post-translational modification N6-acetyllysine; alternate. Lys-161 carries the post-translational modification N6-succinyllysine; alternate. At Ser-166 the chain carries Phosphoserine. Lys-167 is modified (N6-acetyllysine; alternate). Lys-167 is modified (N6-succinyllysine; alternate). Ser-184 carries the phosphoserine modification. Arg-204 is modified (omega-N-methylarginine). ATP contacts are provided by Gln-215, Gly-217, Lys-218, Thr-219, and Ser-220. Thr-219 is a binding site for Mg(2+). 2 positions are modified to N6-acetyllysine; alternate: Lys-230 and Lys-239. N6-succinyllysine; alternate occurs at positions 230 and 239. Lys-240 is subject to N6-acetyllysine. N6-acetyllysine; alternate occurs at positions 261 and 305. Lys-261 and Lys-305 each carry N6-succinyllysine; alternate. Asp-312 serves as a coordination point for Mg(2+). An N6-acetyllysine; alternate modification is found at Lys-427. Lys-427 bears the N6-succinyllysine; alternate mark. Lys-434 bears the N6-acetyllysine mark. Positions 473 and 475 each coordinate ATP. Lys-498, Lys-506, Lys-531, and Lys-539 each carry N6-acetyllysine; alternate. 4 positions are modified to N6-succinyllysine; alternate: Lys-498, Lys-506, Lys-531, and Lys-539. The residue at position 541 (Lys-541) is an N6-acetyllysine.

Belongs to the ATPase alpha/beta chains family. Homotrimer. Component of the ATP synthase complex composed at least of ATP5F1A/subunit alpha, ATP5F1B/subunit beta, ATP5MC1/subunit c (homooctomer), MT-ATP6/subunit a, MT-ATP8/subunit 8, ATP5ME/subunit e, ATP5MF/subunit f, ATP5MG/subunit g, ATP5MK/subunit k, ATP5MJ/subunit j, ATP5F1C/subunit gamma, ATP5F1D/subunit delta, ATP5F1E/subunit epsilon, ATP5PF/subunit F6, ATP5PB/subunit b, ATP5PD/subunit d, ATP5PO/subunit OSCP. ATP synthase complex consists of a soluble F(1) head domain (subunits alpha(3) and beta(3)) - the catalytic core - and a membrane F(0) domain - the membrane proton channel (subunits c, a, 8, e, f, g, k and j). These two domains are linked by a central stalk (subunits gamma, delta, and epsilon) rotating inside the F1 region and a stationary peripheral stalk (subunits F6, b, d, and OSCP). Interacts with ATPAF2. Interacts with HRG; the interaction occurs on the surface of T-cells and alters the cell morphology when associated with concanavalin (in vitro). Interacts with PLG (angiostatin peptide); the interaction inhibits most of the angiogenic properties of angiostatin. Interacts with BLOC1S1. Interacts with BCL2L1 isoform BCL-X(L); the interaction mediates the association of BCL2L1 isoform BCL-X(L) with the mitochondrial membrane F(1)F(0) ATP synthase and enhances neurons metabolic efficiency. Interacts with CLN5 and PPT1. Interacts with S100A1; this interaction increases F1-ATPase activity. Interacts with ABCB7; this interaction allows the regulation of cellular iron homeostasis and cellular reactive oxygen species (ROS) levels in cardiomyocytes. Post-translationally, acetylated on lysine residues. BLOC1S1 is required for acetylation.

The protein resides in the mitochondrion inner membrane. It is found in the cell membrane. Functionally, subunit alpha, of the mitochondrial membrane ATP synthase complex (F(1)F(0) ATP synthase or Complex V) that produces ATP from ADP in the presence of a proton gradient across the membrane which is generated by electron transport complexes of the respiratory chain. ATP synthase complex consist of a soluble F(1) head domain - the catalytic core - and a membrane F(1) domain - the membrane proton channel. These two domains are linked by a central stalk rotating inside the F(1) region and a stationary peripheral stalk. During catalysis, ATP synthesis in the catalytic domain of F(1) is coupled via a rotary mechanism of the central stalk subunits to proton translocation. In vivo, can only synthesize ATP although its ATP hydrolase activity can be activated artificially in vitro. With the catalytic subunit beta (ATP5F1B), forms the catalytic core in the F(1) domain. Subunit alpha does not bear the catalytic high-affinity ATP-binding sites. The sequence is that of ATP synthase F(1) complex subunit alpha, mitochondrial from Pongo abelii (Sumatran orangutan).